Here is a 922-residue protein sequence, read N- to C-terminus: Probable dipeptidyl-aminopeptidase B (922 aa).

Residues 1–16 are compositionally biased toward basic and acidic residues; sequence MATEKGHSRDDEERVP. The tract at residues 1-21 is disordered; the sequence is MATEKGHSRDDEERVPLTRGS. Residues 1–99 are Cytoplasmic-facing; sequence MATEKGHSRD…KPMHKSVKIA (99 aa). A helical; Signal-anchor for type II membrane protein membrane pass occupies residues 100 to 120; sequence LWSLLFLSLGGWSLAFVLFIF. Topologically, residues 121–922 are vacuolar; sequence RSHDTYQTPI…AGLYKFKHLC (802 aa). 4 N-linked (GlcNAc...) asparagine glycosylation sites follow: asparagine 135, asparagine 200, asparagine 351, and asparagine 574. Serine 756 functions as the Charge relay system in the catalytic mechanism. Residue asparagine 815 is glycosylated (N-linked (GlcNAc...) asparagine). Catalysis depends on charge relay system residues aspartate 833 and histidine 866. Asparagine 902 carries N-linked (GlcNAc...) asparagine glycosylation.

It belongs to the peptidase S9B family.

The protein localises to the vacuole membrane. It carries out the reaction Release of an N-terminal dipeptide, Xaa-Yaa-|-Zaa-, from a polypeptide, preferentially when Yaa is Pro, provided Zaa is neither Pro nor hydroxyproline.. In terms of biological role, type IV dipeptidyl-peptidase which removes N-terminal dipeptides sequentially from polypeptides having unsubstituted N-termini provided that the penultimate residue is proline. The polypeptide is Probable dipeptidyl-aminopeptidase B (DAPB) (Ajellomyces capsulatus (strain NAm1 / WU24) (Darling's disease fungus)).